Here is a 60-residue protein sequence, read N- to C-terminus: Potassium channel toxin alpha-KTx 15.9 (60 aa).

An N-terminal signal peptide occupies residues 1–22 (MKIFLPVLVMLILCSMCLLTEG). Intrachain disulfides connect Cys-30–Cys-51, Cys-36–Cys-56, and Cys-40–Cys-58.

Belongs to the short scorpion toxin superfamily. Potassium channel inhibitor family. Alpha-KTx 15 subfamily. Expressed by the venom gland.

The protein localises to the secreted. Blocker of A-type voltage-gated potassium channels of cerebellar granular cells. May also inhibit Kv4/KCND when coexpressed with DPP6 or DPP10. The occlusion of the outer entry of the K(+) conducting pore is partially reversible and affects both open and closed channels. It shares the same target in rat brain than BmTX3 (AC Q8I0L5) and AmmTX3 (AC P60208). Has been shown to weakly inhibit TRPV1 channels. The polypeptide is Potassium channel toxin alpha-KTx 15.9 (Lychas mucronatus (Chinese swimming scorpion)).